Reading from the N-terminus, the 912-residue chain is Protein translocase subunit SecA (912 aa).

Residues Gln-87, 105 to 109 (GEGKT), and Asp-499 each bind ATP. Zn(2+) is bound by residues Cys-897, Cys-899, Cys-908, and His-909.

This sequence belongs to the SecA family. As to quaternary structure, monomer and homodimer. Part of the essential Sec protein translocation apparatus which comprises SecA, SecYEG and auxiliary proteins SecDF-YajC and YidC. The cofactor is Zn(2+).

It is found in the cell inner membrane. It localises to the cytoplasm. The catalysed reaction is ATP + H2O + cellular proteinSide 1 = ADP + phosphate + cellular proteinSide 2.. Functionally, part of the Sec protein translocase complex. Interacts with the SecYEG preprotein conducting channel. Has a central role in coupling the hydrolysis of ATP to the transfer of proteins into and across the cell membrane, serving both as a receptor for the preprotein-SecB complex and as an ATP-driven molecular motor driving the stepwise translocation of polypeptide chains across the membrane. This is Protein translocase subunit SecA from Rhizorhabdus wittichii (strain DSM 6014 / CCUG 31198 / JCM 15750 / NBRC 105917 / EY 4224 / RW1) (Sphingomonas wittichii).